A 471-amino-acid polypeptide reads, in one-letter code: Maintenance of mitochondrial morphology protein 1 (471 aa).

Topologically, residues 1–21 (MSSPQNTSCPPSQHSLSFTQG) are lumenal. The helical transmembrane segment at 22-42 (LLLGQLSVVLLIGAFIKFFIF) threads the bilayer. Topologically, residues 43-471 (GESPSSSSRG…GSLPGAPAVA (429 aa)) are cytoplasmic. The region spanning 128 to 370 (QPESLDWFNV…EPRVQLVALP (243 aa)) is the SMP-LTD domain. 3 disordered regions span residues 271–306 (GTTE…GVRS), 395–415 (EDPA…NRDG), and 448–471 (RGDT…PAVA). Over residues 280 to 295 (PHPENQNESKPSRQDP) the composition is skewed to basic and acidic residues. Polar residues predominate over residues 401 to 410 (ATHSGFTPVN).

Belongs to the MMM1 family. Homodimer. Component of the ER-mitochondria encounter structure (ERMES) or MDM complex, composed of MMM1, MDM10, MDM12 and MDM34. An MMM1 homodimer associates with one molecule of MDM12 on each side in a pairwise head-to-tail manner, and the SMP-LTD domains of MMM1 and MDM12 generate a continuous hydrophobic tunnel for phospholipid trafficking.

The protein localises to the endoplasmic reticulum membrane. Its function is as follows. Component of the ERMES/MDM complex, which serves as a molecular tether to connect the endoplasmic reticulum (ER) and mitochondria. Components of this complex are involved in the control of mitochondrial shape and protein biogenesis, and function in nonvesicular lipid trafficking between the ER and mitochondria. The MDM12-MMM1 subcomplex functions in the major beta-barrel assembly pathway that is responsible for biogenesis of all outer membrane beta-barrel proteins, and acts in a late step after the SAM complex. The MDM10-MDM12-MMM1 subcomplex further acts in the TOM40-specific pathway after the action of the MDM12-MMM1 complex. Essential for establishing and maintaining the structure of mitochondria and maintenance of mtDNA nucleoids. In Arthroderma otae (strain ATCC MYA-4605 / CBS 113480) (Microsporum canis), this protein is Maintenance of mitochondrial morphology protein 1.